The chain runs to 156 residues: Putative pre-16S rRNA nuclease (156 aa).

Belongs to the YqgF nuclease family.

The protein localises to the cytoplasm. Could be a nuclease involved in processing of the 5'-end of pre-16S rRNA. The sequence is that of Putative pre-16S rRNA nuclease from Ehrlichia canis (strain Jake).